A 219-amino-acid polypeptide reads, in one-letter code: Uracil-DNA glycosylase (219 aa).

The Proton acceptor role is filled by Asp59.

It belongs to the uracil-DNA glycosylase (UDG) superfamily. UNG family.

The protein localises to the cytoplasm. The enzyme catalyses Hydrolyzes single-stranded DNA or mismatched double-stranded DNA and polynucleotides, releasing free uracil.. Its function is as follows. Excises uracil residues from the DNA which can arise as a result of misincorporation of dUMP residues by DNA polymerase or due to deamination of cytosine. In Staphylococcus haemolyticus (strain JCSC1435), this protein is Uracil-DNA glycosylase.